The primary structure comprises 333 residues: tRNA N6-adenosine threonylcarbamoyltransferase (333 aa).

2 residues coordinate Fe cation: histidine 111 and histidine 115. Substrate contacts are provided by residues 134–138 (VVSGG), aspartate 167, glycine 180, aspartate 184, and asparagine 269. A Fe cation-binding site is contributed by aspartate 297.

It belongs to the KAE1 / TsaD family. Fe(2+) is required as a cofactor.

It is found in the cytoplasm. It catalyses the reaction L-threonylcarbamoyladenylate + adenosine(37) in tRNA = N(6)-L-threonylcarbamoyladenosine(37) in tRNA + AMP + H(+). Required for the formation of a threonylcarbamoyl group on adenosine at position 37 (t(6)A37) in tRNAs that read codons beginning with adenine. Is involved in the transfer of the threonylcarbamoyl moiety of threonylcarbamoyl-AMP (TC-AMP) to the N6 group of A37, together with TsaE and TsaB. TsaD likely plays a direct catalytic role in this reaction. This Carboxydothermus hydrogenoformans (strain ATCC BAA-161 / DSM 6008 / Z-2901) protein is tRNA N6-adenosine threonylcarbamoyltransferase.